Reading from the N-terminus, the 373-residue chain is Anhydro-N-acetylmuramic acid kinase (373 aa).

13-20 (GTSMDGID) serves as a coordination point for ATP.

The protein belongs to the anhydro-N-acetylmuramic acid kinase family.

It catalyses the reaction 1,6-anhydro-N-acetyl-beta-muramate + ATP + H2O = N-acetyl-D-muramate 6-phosphate + ADP + H(+). Its pathway is amino-sugar metabolism; 1,6-anhydro-N-acetylmuramate degradation. It functions in the pathway cell wall biogenesis; peptidoglycan recycling. Functionally, catalyzes the specific phosphorylation of 1,6-anhydro-N-acetylmuramic acid (anhMurNAc) with the simultaneous cleavage of the 1,6-anhydro ring, generating MurNAc-6-P. Is required for the utilization of anhMurNAc either imported from the medium or derived from its own cell wall murein, and thus plays a role in cell wall recycling. This chain is Anhydro-N-acetylmuramic acid kinase, found in Agrobacterium fabrum (strain C58 / ATCC 33970) (Agrobacterium tumefaciens (strain C58)).